We begin with the raw amino-acid sequence, 350 residues long: Small ribosomal subunit biogenesis GTPase RsgA (350 aa).

Residues 1 to 17 (MSKNKLSKGQQRRVQAN) are compositionally biased toward polar residues. Positions 1–35 (MSKNKLSKGQQRRVQANHQRRLRTDRKPELDDSQL) are disordered. A CP-type G domain is found at 103-273 (TSVLTRPDLY…VIDSPGVREF (171 aa)). Residues 159–162 (NKID) and 213–221 (GQSGVGKSS) each bind GTP. Residues C297, C302, H304, and C310 each contribute to the Zn(2+) site.

This sequence belongs to the TRAFAC class YlqF/YawG GTPase family. RsgA subfamily. As to quaternary structure, monomer. Associates with 30S ribosomal subunit, binds 16S rRNA. The cofactor is Zn(2+).

It is found in the cytoplasm. Its function is as follows. One of several proteins that assist in the late maturation steps of the functional core of the 30S ribosomal subunit. Helps release RbfA from mature subunits. May play a role in the assembly of ribosomal proteins into the subunit. Circularly permuted GTPase that catalyzes slow GTP hydrolysis, GTPase activity is stimulated by the 30S ribosomal subunit. The protein is Small ribosomal subunit biogenesis GTPase RsgA of Yersinia pseudotuberculosis serotype O:1b (strain IP 31758).